A 446-amino-acid polypeptide reads, in one-letter code: Na(+)-translocating NADH-quinone reductase subunit A (446 aa).

This sequence belongs to the NqrA family. As to quaternary structure, composed of six subunits; NqrA, NqrB, NqrC, NqrD, NqrE and NqrF.

It carries out the reaction a ubiquinone + n Na(+)(in) + NADH + H(+) = a ubiquinol + n Na(+)(out) + NAD(+). Its function is as follows. NQR complex catalyzes the reduction of ubiquinone-1 to ubiquinol by two successive reactions, coupled with the transport of Na(+) ions from the cytoplasm to the periplasm. NqrA to NqrE are probably involved in the second step, the conversion of ubisemiquinone to ubiquinol. This Vibrio parahaemolyticus serotype O3:K6 (strain RIMD 2210633) protein is Na(+)-translocating NADH-quinone reductase subunit A.